A 504-amino-acid polypeptide reads, in one-letter code: Paired zinc finger protein 1 (504 aa).

2 consecutive C2H2-type zinc fingers follow at residues 12–35 and 39–62; these read LLCG…RQRH and HMCL…KNKH. The C2H2-type 3; degenerate zinc finger occupies 68–91; sequence FICVCCNWSFGTEIYLKCHEECMK. Disordered regions lie at residues 115–136 and 154–173; these read ALNT…SPVP and IESA…LVSG. The segment covering 159–172 has biased composition (polar residues); it reads RSSASTSTPRTLVS. 2 consecutive C2H2-type zinc fingers follow at residues 179-202 and 206-229; these read IPCG…RRFH and HTCL…KSQH. The C2H2-type 6; degenerate zinc-finger motif lies at 235-258; it reads YNCLCCNWTFLNQVHLISHKTCLK. A C2H2-type 7 zinc finger spans residues 309–332; sequence LSCKSCGKFFYSERSLSKHHRQIH. The C2H2-type 8; degenerate zinc finger occupies 365–389; sequence FNCRCCNWSFATRRCLMSHVECLKK.

In terms of tissue distribution, expressed in proximal gonad.

Its function is as follows. Possible transcriptional regulator. Involved in promoting segregation of chromosomes during meiosis, perhaps acting downstream of the let-60 RAS / mpk-1 MAPK signaling pathway. The polypeptide is Paired zinc finger protein 1 (Caenorhabditis elegans).